Consider the following 401-residue polypeptide: Protein zntC (401 aa).

3 consecutive transmembrane segments (helical) span residues 33 to 53, 61 to 81, and 114 to 134; these read GGLI…PWFL, LVSV…GAGF, and ITIV…SGGL. The disordered stretch occupies residues 141-247; it reads NHMDLSQHNH…SHKDEKDSEK (107 aa). Over residues 167-184 the composition is skewed to acidic residues; the sequence is GDDDDDDVNEDQEEDSTK. The span at 200-209 shows a compositional bias: low complexity; sequence HNSSNSSSNG. The segment covering 212-225 has biased composition (basic residues); it reads HGLKKKKKSKKEHG. A compositionally biased stretch (basic and acidic residues) spans 226 to 247; the sequence is HGHNHDHSSNGHSHKDEKDSEK. The next 5 helical transmembrane spans lie at 256–276, 285–305, 316–336, 351–371, and 381–401; these read AWVF…GLGS, GLLI…GIAI, CIAL…GMAI, GIIL…ELLP, and KLKL…ALWV.

The protein belongs to the ZIP transporter (TC 2.A.5) family.

It is found in the membrane. May transport divalent cations. May participate, with dstA, in the regulation of the differentiation of stalk cells during development. The polypeptide is Protein zntC (zntC) (Dictyostelium discoideum (Social amoeba)).